Consider the following 360-residue polypeptide: COP9 signalosome complex subunit 5 (360 aa).

Positions 60 to 197 (AKISALALLK…IGAFRTYPKD (138 aa)) constitute an MPN domain. 3 residues coordinate Zn(2+): His143, His145, and Asp156. The JAMM motif motif lies at 143–156 (HSHPGYGCWLSGID). Disordered stretches follow at residues 293–315 (LMPS…RDSS) and 341–360 (SNKA…MVEA). The segment covering 341–350 (SNKASTSAPD) has biased composition (polar residues).

Belongs to the peptidase M67A family. CSN5 subfamily. In terms of assembly, component of the CSN complex, probably composed of CSN1, CSN2, CSN3, CSN4, CSN5, CSN6, CSN7 and CSN8. Interacts with MCM2.

Probable protease subunit of the COP9 signalosome complex (CSN), a complex involved in various cellular and developmental processes such as photomorphogenesis and response to hormones. The CSN complex is an essential regulator of the ubiquitin (Ubl) conjugation pathway by mediating the deneddylation of the cullin subunits of SCF-type E3 ligase complexes, leading to decrease the Ubl ligase activity of SCF. Involved in early response to iron deficiency. This Oryza sativa subsp. japonica (Rice) protein is COP9 signalosome complex subunit 5.